A 1055-amino-acid polypeptide reads, in one-letter code: Elongation factor 3 (1055 aa).

Val-45 provides a ligand contact to ADP. HEAT repeat units follow at residues Val-45–Ala-86, Ser-96–Pro-133, Ala-135–Tyr-172, Gly-175–Asn-213, Glu-217–Ile-255, Leu-257–Ser-290, and Arg-295–Glu-337. ABC transporter domains follow at residues Cys-447–Gln-659 and Leu-687–Gly-1004. Asn-723, Glu-933, Asn-936, and His-962 together coordinate ADP. Disordered regions lie at residues His-987–Asp-1006 and Glu-1024–Leu-1055. The segment covering Arg-1033–Lys-1044 has biased composition (basic residues).

It belongs to the ABC transporter superfamily. ABCF family. EF3 subfamily. Associates with ribosomes.

It localises to the cytoplasm. Its subcellular location is the cytosol. The enzyme catalyses ATP + H2O = ADP + phosphate + H(+). It functions in the pathway protein biosynthesis; polypeptide chain elongation. Ribosome-dependent ATPase that functions in cytoplasmic translation elongation. Required for the ATP-dependent release of deacylated tRNA from the ribosomal E-site during protein biosynthesis. Stimulates the eEF1A-dependent binding of aminoacyl-tRNA to the ribosomal A-site, which has reduced affinity for tRNA as long as the E-site is occupied. Assists translation termination by stimulating the release of nascent protein from the ribosome by release factors. Appears to target calcium-channel protein CCH1 to the plasma membrane. The polypeptide is Elongation factor 3 (Cryptococcus neoformans var. neoformans serotype D (strain JEC21 / ATCC MYA-565) (Filobasidiella neoformans)).